The following is a 238-amino-acid chain: Ribonuclease PH (238 aa).

Phosphate contacts are provided by residues Arg86 and 124-126 (GTR).

Belongs to the RNase PH family. Homohexameric ring arranged as a trimer of dimers.

The enzyme catalyses tRNA(n+1) + phosphate = tRNA(n) + a ribonucleoside 5'-diphosphate. In terms of biological role, phosphorolytic 3'-5' exoribonuclease that plays an important role in tRNA 3'-end maturation. Removes nucleotide residues following the 3'-CCA terminus of tRNAs; can also add nucleotides to the ends of RNA molecules by using nucleoside diphosphates as substrates, but this may not be physiologically important. Probably plays a role in initiation of 16S rRNA degradation (leading to ribosome degradation) during starvation. This Acinetobacter baylyi (strain ATCC 33305 / BD413 / ADP1) protein is Ribonuclease PH.